Here is a 514-residue protein sequence, read N- to C-terminus: Folylpolyglutamate synthase (514 aa).

Position 82 to 85 (82 to 85 (GKGS)) interacts with ATP. Residues S107, E186, and H214 each coordinate Mg(2+). The ATP site is built by R339 and D355.

It belongs to the folylpolyglutamate synthase family. The cofactor is a monovalent cation.

Its subcellular location is the mitochondrion inner membrane. The protein localises to the mitochondrion matrix. It localises to the cytoplasm. The enzyme catalyses (6S)-5,6,7,8-tetrahydrofolyl-(gamma-L-Glu)(n) + L-glutamate + ATP = (6S)-5,6,7,8-tetrahydrofolyl-(gamma-L-Glu)(n+1) + ADP + phosphate + H(+). It functions in the pathway cofactor biosynthesis; tetrahydrofolylpolyglutamate biosynthesis. Catalyzes conversion of folates to polyglutamate derivatives allowing concentration of folate compounds in the cell and the intracellular retention of these cofactors, which are important substrates for most of the folate-dependent enzymes that are involved in one-carbon transfer reactions involved in purine, pyrimidine and amino acid synthesis. In Candida albicans (Yeast), this protein is Folylpolyglutamate synthase (MET7).